The primary structure comprises 55 residues: TQGNTCGGETCSAAQVCLKGKCVCNEVHCRIRCKYGLKKDENGCEYPCSCAKASQ.

5 disulfide bridges follow: Cys-6/Cys-17, Cys-11/Cys-22, Cys-24/Cys-44, Cys-29/Cys-48, and Cys-33/Cys-50. The region spanning 24–50 (CNEVHCRIRCKYGLKKDENGCEYPCSC) is the Antistasin-like domain.

This sequence belongs to the protease inhibitor I15 (antistasin) family.

The protein resides in the secreted. Functionally, acts as an inhibitor of tissue kallikrein, trypsin, chymotrypsin and neutrophil cathepsin G. The sequence is that of Hirustasin from Hirudo medicinalis (Medicinal leech).